Reading from the N-terminus, the 163-residue chain is Retinoic acid receptor responder protein 2 (163 aa).

Residues 1–20 (MRRLLIPLALWLGAVGVGVA) form the signal peptide. 3 disulfide bridges follow: cysteine 77-cysteine 87, cysteine 98-cysteine 117, and cysteine 101-cysteine 135. Positions 158–163 (KALPRS) are excised as a propeptide.

In terms of processing, secreted in an inactive precursor form, prochemerin, which is proteolytically processed by a variety of extracellular proteases to generate forms with differing levels of bioactivity. For example, the removal of six amino acids results in chemerin-157, which exhibits the highest activity, while removal of seven amino acids results in chemerin-156 which has slightly less activity. Some proteases are able to cleave at more than one site and chemerin forms may be sequentially processed by different enzymes to modulate activity levels. The coordinated expression and activity of chemerin-modifying enzymes is essential for regulating its bioactivation, inactivation and, consequently, biological function. Cathepsin G cleaves seven C-terminal amino acids from prochemerin (chemerin-156), elastase is able to cleave six (chemerin-157), eight (chemerin-155) or eleven (chemerin-152), plasmin cleaves five amino acids (chemerin-158), and tryptase cleaves five (chemerin-158) or eight (chemerin-155). Multiple cleavages might be required to fully activate chemerin, with an initial tryptase cleavage resulting in chemerin with low activity (chemerin-158), and a second cleavage by carboxypeptidase N or B producing highly active chemerin (chemerin-157). In terms of tissue distribution, expressed at the highest levels in placenta, liver, and white adipose tissue (WAT), and to a lesser extent in many other tissues such as lung, brown adipose tissue, heart, ovary, kidney, skeletal muscle and pancreas. Within WAT, expression is enriched in adipocytes as compared to the stromal vascular fraction. Expression and secretion increases dramatically with adipogenesis. Highly expressed in skin (basal and suprabasal layers of the epidermis, hair follicles and endothelial cells). Expression is elevated in numerous metabolic and inflammatory diseases including psoriasis, obesity, type 2 diabetes, metabolic syndrome and cardiovascular disease.

The protein localises to the secreted. Functionally, adipocyte-secreted protein (adipokine) that regulates adipogenesis, metabolism and inflammation through activation of the chemokine-like receptor 1 (CMKLR1). Also acts as a ligand for CMKLR2. Can also bind to C-C chemokine receptor-like 2 (CCRL2), but with a lower affinity than it does to CMKLR1 or CMKLR2. Positively regulates adipocyte differentiation, modulates the expression of adipocyte genes involved in lipid and glucose metabolism and might play a role in angiogenesis, a process essential for the expansion of white adipose tissue. Also acts as a pro-inflammatory adipokine, causing an increase in secretion of pro-inflammatory and prodiabetic adipokines, which further impair adipose tissue metabolic function and have negative systemic effects including impaired insulin sensitivity, altered glucose and lipid metabolism, and a decrease in vascular function in other tissues. Can have both pro- and anti-inflammatory properties depending on the modality of enzymatic cleavage by different classes of proteases. Acts as a chemotactic factor for leukocyte populations expressing CMKLR1, particularly immature plasmacytoid dendritic cells, but also immature myeloid DCs, macrophages and natural killer cells. Exerts an anti-inflammatory role by preventing TNF/TNFA-induced VCAM1 expression and monocytes adhesion in vascular endothelial cells. The effect is mediated via inhibiting activation of NF-kappa-B and CRK/p38 through stimulation of AKT1/NOS3 signaling and nitric oxide production. Its dual role in inflammation and metabolism might provide a link between chronic inflammation and obesity, as well as obesity-related disorders such as type 2 diabetes and cardiovascular disease. Exhibits an antimicrobial function in the skin. The protein is Retinoic acid receptor responder protein 2 (RARRES2) of Homo sapiens (Human).